Here is a 339-residue protein sequence, read N- to C-terminus: Ferrochelatase (339 aa).

Fe cation contacts are provided by His-209 and Glu-290.

The protein belongs to the ferrochelatase family.

The protein localises to the cytoplasm. It catalyses the reaction heme b + 2 H(+) = protoporphyrin IX + Fe(2+). It functions in the pathway porphyrin-containing compound metabolism; protoheme biosynthesis; protoheme from protoporphyrin-IX: step 1/1. Functionally, catalyzes the ferrous insertion into protoporphyrin IX. The polypeptide is Ferrochelatase (Rhizobium meliloti (strain 1021) (Ensifer meliloti)).